Here is a 331-residue protein sequence, read N- to C-terminus: UPF0194 membrane protein YbhG (331 aa).

An N-terminal signal peptide occupies residues 1–19 (MKKPVVIGLAIAAIVAVIA). The stretch at 107–208 (EEIAQAAAAV…LDLQDTTLIA (102 aa)) forms a coiled coil.

Belongs to the UPF0194 family.

The protein localises to the periplasm. In Salmonella paratyphi A (strain ATCC 9150 / SARB42), this protein is UPF0194 membrane protein YbhG.